A 704-amino-acid polypeptide reads, in one-letter code: Neutral ceramidase (704 aa).

Residues 1 to 23 (MANSKMAFLAFLAVSFLCGLVSA) form the signal peptide. N230 is a glycosylation site (N-linked (GlcNAc...) asparagine). S276 functions as the Nucleophile in the catalytic mechanism. N-linked (GlcNAc...) asparagine glycans are attached at residues N362, N550, and N598.

This sequence belongs to the neutral ceramidase family. Post-translationally, N-glycosylated. As to expression, widely expressed in different tissues but enriched in neurons at all stages of development.

The protein resides in the secreted. It catalyses the reaction an N-acylsphing-4-enine + H2O = sphing-4-enine + a fatty acid. Functionally, hydrolyzes the sphingolipid ceramide into sphingosine and free fatty acid at an optimal pH of 6.5-7.5. Acts as a key regulator of sphingolipid signaling metabolites by generating sphingosine at the cell surface. Regulates synaptic vesicle exocytosis and trafficking by controlling presynaptic terminal sphingolipid composition. The protein is Neutral ceramidase (CDase) of Drosophila melanogaster (Fruit fly).